The chain runs to 223 residues: Ribonuclease T (223 aa).

The Exonuclease domain occupies 20–194 (VVIDVETAGF…YDTERTAELF (175 aa)). Residues aspartate 23, glutamate 25, histidine 181, and aspartate 186 each contribute to the Mg(2+) site. Histidine 181 acts as the Proton donor/acceptor in catalysis.

Belongs to the RNase T family. In terms of assembly, homodimer. It depends on Mg(2+) as a cofactor.

Its function is as follows. Trims short 3' overhangs of a variety of RNA species, leaving a one or two nucleotide 3' overhang. Responsible for the end-turnover of tRNA: specifically removes the terminal AMP residue from uncharged tRNA (tRNA-C-C-A). Also appears to be involved in tRNA biosynthesis. The protein is Ribonuclease T of Shewanella sp. (strain W3-18-1).